Reading from the N-terminus, the 105-residue chain is MRGGGNMQQMMKQMQKMQKKMAQEQEKLKEERVAGTAGGGMVTVTVTGHKEVVDVEIKEEAVDPEDIEMLQDLVLAATNEAMNKADELTQQRLGKHTQGLNIPGM.

Positions 1–40 (MRGGGNMQQMMKQMQKMQKKMAQEQEKLKEERVAGTAGGG) are disordered. Positions 7 to 16 (MQQMMKQMQK) are enriched in low complexity. Basic and acidic residues predominate over residues 21-33 (MAQEQEKLKEERV).

This sequence belongs to the YbaB/EbfC family. Homodimer.

It is found in the cytoplasm. The protein resides in the nucleoid. Functionally, binds to DNA and alters its conformation. May be involved in regulation of gene expression, nucleoid organization and DNA protection. This Staphylococcus epidermidis (strain ATCC 12228 / FDA PCI 1200) protein is Nucleoid-associated protein SE_2306.